Here is a 338-residue protein sequence, read N- to C-terminus: Anthranilate phosphoribosyltransferase (338 aa).

5-phospho-alpha-D-ribose 1-diphosphate is bound by residues Gly-81, 84–85 (GD), Thr-89, 91–94 (NVST), 109–117 (KHGNRALSS), and Ala-121. Residue Gly-81 participates in anthranilate binding. Residue Ser-93 participates in Mg(2+) binding. Residue Asn-112 coordinates anthranilate. Arg-167 serves as a coordination point for anthranilate. Positions 225 and 226 each coordinate Mg(2+).

The protein belongs to the anthranilate phosphoribosyltransferase family. As to quaternary structure, homodimer. The cofactor is Mg(2+).

It catalyses the reaction N-(5-phospho-beta-D-ribosyl)anthranilate + diphosphate = 5-phospho-alpha-D-ribose 1-diphosphate + anthranilate. Its pathway is amino-acid biosynthesis; L-tryptophan biosynthesis; L-tryptophan from chorismate: step 2/5. Functionally, catalyzes the transfer of the phosphoribosyl group of 5-phosphorylribose-1-pyrophosphate (PRPP) to anthranilate to yield N-(5'-phosphoribosyl)-anthranilate (PRA). The polypeptide is Anthranilate phosphoribosyltransferase (Chelativorans sp. (strain BNC1)).